The sequence spans 1476 residues: MKSLLNAFTKKEVPFREAPAYSNRRRRPPNTLAAPRVLLRSNSDNNLNAGAPEWAVCSAATSHRSLSPQLLQQTPSKPDGATKSLGSYTPGPRSRSPSLNRLGGTAEDGKRTQPHWHVGSPFTPGANKDSLSTFEYPGPRRKLYSAVPGRLFVAVKPYQPQVDGEIPLHRGDRVKVLSIGEGGFWEGSARGHIGWFPAECVEEVQCKPRDSQAETRADRSKKLFRHYTVGSYDSFDAASDCIIEDKTVVLQKKDNEGFGFVLRGAKADTPIEEFTPTPAFPALQYLESVDEGGVAWQAGLRTGDFLIEVNNENVVKVGHRQVVNMIRQGGNHLILKVVTVTRNLDPDDTARKKAPPPPKRAPTTALTLRSKSMTAELEELGLSLVDKASVRKKKDKPEEIVPASKPSRTAENVAIESRVATIKQRPTSRCFPAASDVNSVYERQGIAVMTPTVPGSPKGPFLGLPRGTMRRQKSIDSRIFLSGITEEERQFLAPPMLKFTRSLSMPDTSEDIPPPPQSVPPSPPPPSPTTYNCPRSPTPRVYGTIKPAFNQNPVVAKVPPATRSDTVATMMREKGMFYRRELDRFSLDSEDVYSRSPAPQAAFRTKRGQMPENPYSEVGKIASKAVYVPAKPARRKGVLVKQSNVEDSPEKTCSIPIPTIIVKEPSTSSSGKSSQGSSMEIDPQATEPGQLRPDDSLTVSSPFAAAIAGAVRDREKRLEARRNSPAFLSTDLGDEDVGLGPPAPRMQASKFPEEGGFGDEDETEQPLLPTPGAAPRELENHFLGGGEAGAQGEAGGPLSSTSKAKGPESGPAAPLKSSSPAGPENYVHPLTGRLLDPSSPLALALSARDRAMQESQQGHKGEAPKADLNKPLYIDTKMRPSVESGFPPVTRQNTRGPLRRQETENKYETDLGKDRRADDKKNMLINIVDTAQQKSAGLLMVHTVDVPMAGPPLEEEEDREDGDTKPDHSPSTVPEGVPKTEGALQISAAPEPAVAPGRTIVAAGSVEEAVILPFRIPPPPLASVDLDEDFLFTEPLPPPLEFANSFDIPDDRAASVPALADLVKQKKNDTSQPPTLNSSQPANSTDSKKPAGISNCLPSSFLPPPESFDAVTDSGIEEVDSRSSSDHHLETTSTISTVSSISTLSSEGGESMDTCTVYADGQAFVVDKPPVPPKPKMKPIVHKSNALYQDTLPEEDTDGFVIPPPAPPPPPGSAQAGVAKVIQPRTSKLWGDVPEVKSPILSGPKANVISELNSILQQMNRGKSVKPGEGLELPVGAKSANLAPRSPEVMSTVSGTRSTTVTFTVRPGTSQPITLQSRPPDYESRTSGPRRAPSPVVSPTELSKEILPTPPPPSATAASPSPTLSDVFSLPSQSPAGDLFGLNPAGRSRSPSPSILQQPISNKPFTTKPVHLWTKPDVADWLESLNLGEHKETFMDNEIDGSHLPNLQKEDLIDLGVTRVGHRMNIERALKQLLDR.

Positions 66 to 76 are enriched in polar residues; it reads LSPQLLQQTPS. The interval 66–134 is disordered; sequence LSPQLLQQTP…GANKDSLSTF (69 aa). In terms of domain architecture, SH3 spans 147 to 206; that stretch reads VPGRLFVAVKPYQPQVDGEIPLHRGDRVKVLSIGEGGFWEGSARGHIGWFPAECVEEVQC. Val-162 bears the Phosphoserine mark. The 95-residue stretch at 247 to 341 folds into the PDZ domain; that stretch reads TVVLQKKDNE…HLILKVVTVT (95 aa). Ser-372 bears the Phosphoserine mark. Residues 391-412 are disordered; sequence RKKKDKPEEIVPASKPSRTAEN. The residue at position 456 (Ser-456) is a Phosphoserine. Thr-485 is subject to Phosphothreonine. Positions 503–533 are disordered; that stretch reads LSMPDTSEDIPPPPQSVPPSPPPPSPTTYNC. A compositionally biased stretch (pro residues) spans 512 to 528; that stretch reads IPPPPQSVPPSPPPPSP. Ser-586 carries the phosphoserine modification. 3 disordered regions span residues 659–916, 946–983, and 1057–1153; these read TIIV…KDRR, VPMA…TEGA, and PALA…ESMD. Residues 666 to 678 are compositionally biased toward low complexity; sequence STSSSGKSSQGSS. Residues 711 to 722 are compositionally biased toward basic and acidic residues; the sequence is VRDREKRLEARR. Ser-724 carries the phosphoserine modification. Over residues 783-795 the composition is skewed to gly residues; that stretch reads LGGGEAGAQGEAG. Residues 833–846 show a composition bias toward low complexity; it reads RLLDPSSPLALALS. Basic and acidic residues-rich tracts occupy residues 847–868 and 899–916; these read ARDR…KADL and RRQE…KDRR. At Thr-903 the chain carries Phosphothreonine. Positions 1070-1085 are enriched in polar residues; that stretch reads TSQPPTLNSSQPANST. Basic and acidic residues predominate over residues 1119 to 1130; the sequence is VDSRSSSDHHLE. A compositionally biased stretch (low complexity) spans 1131–1151; sequence TTSTISTVSSISTLSSEGGES. The SH3-binding motif lies at 1169 to 1175; the sequence is PPVPPKP. Disordered regions lie at residues 1195–1216 and 1260–1403; these read EDTD…SAQA and NRGK…ISNK. Positions 1202–1212 are enriched in pro residues; the sequence is IPPPAPPPPPG. The segment covering 1291 to 1305 has biased composition (low complexity); that stretch reads STVSGTRSTTVTFTV. Thr-1292 carries an O-linked (GlcNAc) threonine glycan. Polar residues predominate over residues 1307 to 1317; the sequence is PGTSQPITLQS. Phosphoserine is present on residues Ser-1334 and Ser-1338. Residues 1364–1375 are compositionally biased toward polar residues; it reads LSDVFSLPSQSP. A compositionally biased stretch (low complexity) spans 1387 to 1401; the sequence is RSRSPSPSILQQPIS. One can recognise an SAM domain in the interval 1413-1476; the sequence is WTKPDVADWL…ERALKQLLDR (64 aa).

This sequence belongs to the SHANK family. As to quaternary structure, is part of a complex with DLG4/PSD-95 and DLGAP1/GKAP. Interacts with CTTN/cortactin SH3 domain, DLGAP1/GKAP and alpha-latrotoxin receptor 1. Interacts with DNM2, DBNL, GRID2, BAIAP2, SLC9A3, PLCB3 and CFTR. Interacts (via proline-rich region) with PDE4D. Interacts with ABI1 (via SH3 domain). As to expression, detected in brain (at protein level), where it is highly expressed in Purkinje cells.

The protein resides in the apical cell membrane. It is found in the cytoplasm. Its subcellular location is the synapse. The protein localises to the postsynaptic density. It localises to the cell projection. The protein resides in the dendritic spine. It is found in the growth cone. In terms of biological role, seems to be an adapter protein in the postsynaptic density (PSD) of excitatory synapses that interconnects receptors of the postsynaptic membrane including NMDA-type and metabotropic glutamate receptors, and the actin-based cytoskeleton. May play a role in the structural and functional organization of the dendritic spine and synaptic junction. The polypeptide is SH3 and multiple ankyrin repeat domains protein 2 (Shank2) (Mus musculus (Mouse)).